The chain runs to 326 residues: Adenosine receptor A1 (326 aa).

The Extracellular segment spans residues methionine 1 to alanine 10. The chain crosses the membrane as a helical span at residues alanine 11–alanine 33. Over valine 34–cysteine 46 the chain is Cytoplasmic. A helical transmembrane segment spans residues phenylalanine 47–isoleucine 69. Over asparagine 70–cysteine 80 the chain is Extracellular. Cysteine 80 and cysteine 169 are disulfide-bonded. A helical transmembrane segment spans residues leucine 81–alanine 102. Residues valine 103–arginine 123 lie on the Cytoplasmic side of the membrane. The helical transmembrane segment at alanine 124–tryptophan 146 threads the bilayer. Residues asparagine 147–serine 176 are Extracellular-facing. N-linked (GlcNAc...) asparagine glycans are attached at residues asparagine 148 and asparagine 159. A helical transmembrane segment spans residues methionine 177 to leucine 201. At glutamate 202–serine 235 the chain is on the cytoplasmic side. A helical transmembrane segment spans residues leucine 236–phenylalanine 259. The Extracellular portion of the chain corresponds to cysteine 260–serine 267. A helical transmembrane segment spans residues isoleucine 268–isoleucine 292. At histidine 293–aspartate 326 the chain is on the cytoplasmic side. Cysteine 309 carries S-palmitoyl cysteine lipidation.

It belongs to the G-protein coupled receptor 1 family.

The protein resides in the cell membrane. Functionally, receptor for adenosine. The activity of this receptor is mediated by G proteins which inhibit adenylyl cyclase. The polypeptide is Adenosine receptor A1 (Adora1) (Mus musculus (Mouse)).